A 474-amino-acid chain; its full sequence is tRNA-2-methylthio-N(6)-dimethylallyladenosine synthase (474 aa).

Residues 3 to 120 (KKLHIKTWGC…LPEMLNHVQG (118 aa)) form the MTTase N-terminal domain. Residues cysteine 12, cysteine 49, cysteine 83, cysteine 157, cysteine 161, and cysteine 164 each contribute to the [4Fe-4S] cluster site. In terms of domain architecture, Radical SAM core spans 143-375 (RAEGPTAFVS…QDRINQQVLQ (233 aa)). One can recognise a TRAM domain in the interval 378 to 441 (RRMLGTVQRI…TNSLRGTVVR (64 aa)).

Belongs to the methylthiotransferase family. MiaB subfamily. In terms of assembly, monomer. Requires [4Fe-4S] cluster as cofactor.

It localises to the cytoplasm. It carries out the reaction N(6)-dimethylallyladenosine(37) in tRNA + (sulfur carrier)-SH + AH2 + 2 S-adenosyl-L-methionine = 2-methylsulfanyl-N(6)-dimethylallyladenosine(37) in tRNA + (sulfur carrier)-H + 5'-deoxyadenosine + L-methionine + A + S-adenosyl-L-homocysteine + 2 H(+). In terms of biological role, catalyzes the methylthiolation of N6-(dimethylallyl)adenosine (i(6)A), leading to the formation of 2-methylthio-N6-(dimethylallyl)adenosine (ms(2)i(6)A) at position 37 in tRNAs that read codons beginning with uridine. This Serratia proteamaculans (strain 568) protein is tRNA-2-methylthio-N(6)-dimethylallyladenosine synthase.